A 487-amino-acid polypeptide reads, in one-letter code: UPF0276 protein SAV_2218 (487 aa).

The interval 1-285 is UPF0276; sequence MVEEGTMERL…LGAIRKTLEK (285 aa). The tract at residues 286–487 is unknown; it reads AGTRAGASAG…RATRRVLLRR (202 aa). The disordered stretch occupies residues 319 to 348; sequence AGPRRGGADAQAAPRAAGTEALSAASTSTP. Over residues 326–348 the composition is skewed to low complexity; the sequence is ADAQAAPRAAGTEALSAASTSTP.

This sequence in the N-terminal section; belongs to the UPF0276 family.

This chain is UPF0276 protein SAV_2218, found in Streptomyces avermitilis (strain ATCC 31267 / DSM 46492 / JCM 5070 / NBRC 14893 / NCIMB 12804 / NRRL 8165 / MA-4680).